A 146-amino-acid chain; its full sequence is MTRVVAQGTFDLIHPGHVHYLEDAAAMGDELHVILARRENVTHKDPPVLPNRQRRDVVAALDPVDHARIGHPEDIFAPIEAIDPDVIALGFDQHHDAAAIEAELADRGLDCAVERASPREARYDDEVLSSGDIADRVLAQRGDSDP.

ATP-binding positions include 9-10 (TF), 14-17 (HPGH), and D92.

The protein belongs to the archaeal FAD synthase family. Homodimer. It depends on a divalent metal cation as a cofactor.

It catalyses the reaction FMN + ATP + H(+) = FAD + diphosphate. It functions in the pathway cofactor biosynthesis; FAD biosynthesis; FAD from FMN: step 1/1. Functionally, catalyzes the transfer of the AMP portion of ATP to flavin mononucleotide (FMN) to produce flavin adenine dinucleotide (FAD) coenzyme. In Halobacterium salinarum (strain ATCC 29341 / DSM 671 / R1), this protein is FAD synthase.